The following is a 228-amino-acid chain: Geranylgeranylglyceryl phosphate synthase (228 aa).

Lys-13 contributes to the sn-glycerol 1-phosphate binding site. Asp-15 and Thr-41 together coordinate Mg(2+). Sn-glycerol 1-phosphate contacts are provided by residues 159–164 (YIEYSG), Gly-189, and 209–210 (GN).

Belongs to the GGGP/HepGP synthase family. Group I subfamily. Requires Mg(2+) as cofactor.

It localises to the cytoplasm. It carries out the reaction sn-glycerol 1-phosphate + (2E,6E,10E)-geranylgeranyl diphosphate = sn-3-O-(geranylgeranyl)glycerol 1-phosphate + diphosphate. It functions in the pathway membrane lipid metabolism; glycerophospholipid metabolism. In terms of biological role, prenyltransferase that catalyzes the transfer of the geranylgeranyl moiety of geranylgeranyl diphosphate (GGPP) to the C3 hydroxyl of sn-glycerol-1-phosphate (G1P). This reaction is the first ether-bond-formation step in the biosynthesis of archaeal membrane lipids. This is Geranylgeranylglyceryl phosphate synthase from Methanospirillum hungatei JF-1 (strain ATCC 27890 / DSM 864 / NBRC 100397 / JF-1).